A 235-amino-acid polypeptide reads, in one-letter code: Phosphoribosylaminoimidazole-succinocarboxamide synthase (235 aa).

The protein belongs to the SAICAR synthetase family.

It carries out the reaction 5-amino-1-(5-phospho-D-ribosyl)imidazole-4-carboxylate + L-aspartate + ATP = (2S)-2-[5-amino-1-(5-phospho-beta-D-ribosyl)imidazole-4-carboxamido]succinate + ADP + phosphate + 2 H(+). The protein operates within purine metabolism; IMP biosynthesis via de novo pathway; 5-amino-1-(5-phospho-D-ribosyl)imidazole-4-carboxamide from 5-amino-1-(5-phospho-D-ribosyl)imidazole-4-carboxylate: step 1/2. This chain is Phosphoribosylaminoimidazole-succinocarboxamide synthase, found in Exiguobacterium sibiricum (strain DSM 17290 / CCUG 55495 / CIP 109462 / JCM 13490 / 255-15).